The chain runs to 151 residues: Deoxyuridine 5'-triphosphate nucleotidohydrolase (151 aa).

Substrate contacts are provided by residues 70–72 (RSG), Asn83, 87–89 (LID), and Met97.

It belongs to the dUTPase family. Mg(2+) is required as a cofactor.

The enzyme catalyses dUTP + H2O = dUMP + diphosphate + H(+). Its pathway is pyrimidine metabolism; dUMP biosynthesis; dUMP from dCTP (dUTP route): step 2/2. In terms of biological role, this enzyme is involved in nucleotide metabolism: it produces dUMP, the immediate precursor of thymidine nucleotides and it decreases the intracellular concentration of dUTP so that uracil cannot be incorporated into DNA. This is Deoxyuridine 5'-triphosphate nucleotidohydrolase from Pseudomonas putida (strain ATCC 47054 / DSM 6125 / CFBP 8728 / NCIMB 11950 / KT2440).